A 536-amino-acid polypeptide reads, in one-letter code: MLSRIEQELAQLGITNVKEIVRNPSYEQLFEEEMKPELEGFEKGRLTTSGAVAVDTGIFTGRSPKDKYIVYDETSKDNVWWTSDAVKNDNKPMNQATWQSLKELVTHQLSNKRLFVVDAFCGANKDSRVAVRIVTEVAWQAHFVKNMFVRPSEEELLNFVPDFVVMNGSKVTNPNWKEQGLNSENFVAFNLTEKIQLIGGTWYGGEMKKGLFSLMNYWLPLKGIASMHCSANVGAEGDVAVFFGLSGTGKTTLSTDPKRKLIGDDEHGWDDDGVFNYEGGCYAKTINLSEENEPDIYRAIRRDALLENVVVREDGSVDFADGSKTENTRVSYPIHHIDNIVEPVSKAGHAKKVIFLTADAFGVLPPVSKLTPEQTKYYFLSGFTAKLAGTERGITEPTPTFSACFGAAFLSLHPTKYAEVLVKRMEEAGSQAYLVNTGWNGSGKRISIKDTRGIIDAILDGSIEKAETKELPIFNLAIPTALPNVDPAILDPRDTYADKAQWQTKAEDLAGRFVKNFEKYTTNDEGKALVAAGPKL.

Substrate-binding residues include Arg-62, Tyr-203, and Lys-209. Residues Lys-209, His-228, and 244–252 (GLSGTGKTT) each bind ATP. The Mn(2+) site is built by Lys-209 and His-228. Residue Asp-265 coordinates Mn(2+). Residues Glu-293, Arg-329, 445 to 446 (RI), and Thr-451 each bind ATP. Position 329 (Arg-329) interacts with substrate.

It belongs to the phosphoenolpyruvate carboxykinase (ATP) family. In terms of assembly, monomer. Mn(2+) is required as a cofactor.

Its subcellular location is the cytoplasm. It carries out the reaction oxaloacetate + ATP = phosphoenolpyruvate + ADP + CO2. It participates in carbohydrate biosynthesis; gluconeogenesis. Functionally, involved in the gluconeogenesis. Catalyzes the conversion of oxaloacetate (OAA) to phosphoenolpyruvate (PEP) through direct phosphoryl transfer between the nucleoside triphosphate and OAA. This Actinobacillus pleuropneumoniae serotype 5b (strain L20) protein is Phosphoenolpyruvate carboxykinase (ATP).